A 313-amino-acid polypeptide reads, in one-letter code: Thymidylate synthase (313 aa).

The tract at residues 1 to 28 (MPVAGSELPRRPLPPAAQERDAEPRPPH) is disordered. The segment covering 18–28 (QERDAEPRPPH) has biased composition (basic and acidic residues). Arg50 contributes to the dUMP binding site. Ser114 is subject to Phosphoserine. DUMP contacts are provided by residues 175-176 (RR), 195-196 (CH), 215-218 (RSGD), Asn226, and 256-258 (HIY). Residue Cys195 is the Nucleophile of the active site. Asp218 contributes to the (6R)-5,10-methylene-5,6,7,8-tetrahydrofolate binding site. Glycyl lysine isopeptide (Lys-Gly) (interchain with G-Cter in SUMO2) cross-links involve residues Lys287, Lys292, and Lys308. Ala312 serves as a coordination point for (6R)-5,10-methylene-5,6,7,8-tetrahydrofolate.

This sequence belongs to the thymidylate synthase family. As to quaternary structure, homodimer.

It is found in the nucleus. Its subcellular location is the cytoplasm. The protein resides in the mitochondrion. It localises to the mitochondrion matrix. The protein localises to the mitochondrion inner membrane. The enzyme catalyses dUMP + (6R)-5,10-methylene-5,6,7,8-tetrahydrofolate = 7,8-dihydrofolate + dTMP. It functions in the pathway pyrimidine metabolism; dTTP biosynthesis. Its function is as follows. Catalyzes the reductive methylation of 2'-deoxyuridine 5'-monophosphate (dUMP) to thymidine 5'-monophosphate (dTMP), using the cosubstrate, 5,10- methylenetetrahydrofolate (CH2H4folate) as a 1-carbon donor and reductant and contributes to the de novo mitochondrial thymidylate biosynthesis pathway. The sequence is that of Thymidylate synthase from Homo sapiens (Human).